Here is a 573-residue protein sequence, read N- to C-terminus: MNQTRVFLIFAWLMVAALLWMEWGKDKAAANAPTPIASQAVPAARDPDAAAPAANVPSAQAIPQAGSPAAVPATSTTTATPATTGAAPAITLTSDVLRLKLDGRSVLDAELLQFPQTKDGTEPVKLLTEDAAHPYNATSGWASERSPVPGVGGFRAEQPGTTFELAKGQNTLVVPFVWNGPNGVSIRRIFTLQRGSYAISIKDEVINKSDAAWNGYVFRKLSRVPTILSRGMTNPDSFSFNGATWYSPQEGYERRAFKDYMDDGGLNRQITGGWVALLQHHFFTAWIPQKDQASLYVLAQDGPRDVAELRGPAFTVAPGQSASTEARLWVGPKLVSLLAKEDVKGLDRVVDYSRFSIMAIIGQGLFWVLSHLHSFLHNWGWAIIGLVVLLRLALYPLSAAQYKSGAKMRRFQPRLAQLKERYGDDRQKYQQATMELFKKEKINPMGGCLPLLIQMPIFFALYWVLVESVELRQAPWLGWIQDLTARDPYFILPVLNIAIMWATQKLTPTPGMDPMQAKMMQFMPLVFGVMMAFMPAGLVLYWVVNGGLGLLIQWWMIRQHGEKPSKIIQANAK.

The next 6 membrane-spanning stretches (helical) occupy residues 6 to 26 (VFLI…WGKD), 355 to 375 (FSIM…LHSF), 379 to 399 (WGWA…PLSA), 446 to 466 (GGCL…WVLV), 488 to 508 (PYFI…KLTP), and 524 to 544 (PLVF…YWVV).

The protein belongs to the OXA1/ALB3/YidC family. Type 1 subfamily. As to quaternary structure, interacts with the Sec translocase complex via SecD. Specifically interacts with transmembrane segments of nascent integral membrane proteins during membrane integration.

It localises to the cell inner membrane. Functionally, required for the insertion and/or proper folding and/or complex formation of integral membrane proteins into the membrane. Involved in integration of membrane proteins that insert both dependently and independently of the Sec translocase complex, as well as at least some lipoproteins. Aids folding of multispanning membrane proteins. This chain is Membrane protein insertase YidC, found in Xanthomonas campestris pv. campestris (strain ATCC 33913 / DSM 3586 / NCPPB 528 / LMG 568 / P 25).